An 864-amino-acid chain; its full sequence is MTDPAKTHTPMMQQYLAIKAEYPDTLVFYRMGDFYEVFFADAEKAARLLDITLTRRGQSGGEPVVMAGVPFHSLEGYLAKLIKLGESVAICEQVGDVATSKGPVERKVVRVVTPGTLTDTELLNDKAESILLAVHQGARNTCGLAWLSVTQGEIHLAHCANDELETWLARVNPSELLYNVDVTPAFEQRLKTQRCAASARPAWQFDGALGARRLLEQLKVASLASWNAEALNEAHAAASALLGYAEHTQGRALPHVQGLQVVRSGELIELPQSTRRNLELTQTLRGEDSPTLFSLLDTCSTGMGSRALKSWLLSPRRDRAQAQARLEAIAHLRSGPQQTLRARLKGCSDVERITARLALRQVRPRELVALRQTLDKLQQQSERAAGESIGLPELLTRIFEDLQPPPGCTELLGRYVLDEPAALIRDGGVINHGCDADLDELRAIQTNCDGFLLELEGRERARTGIANLRVQFNKVHGFYIEVTQGQLDKVPDDYRRRQTLKNAERYITPELKAFEDKALSAQERALAREKWLYEQLLDQLQAFIPALSRLARALASLDALCALAERSLTLNWAAPVFVKEPCIDITQGRHPVVEARLAETGGGSFIANDCSLSGKHRMQVITGPNMGGKSTYMRQVALIVLLASVGSYVPAARCRLGPIDAIHTRIGAADDVANAQSTFMLEMTEAAQILHTATPHSLVLMDEIGRGTSTFDGLALAGGIAAYLHNKTQAFTLFATHYFELTEFPAQHHGAINVHVSAVESGANIVFLHHIEPGPASKSYGIAVAKLAGVPSAVVTHARHALSALETQQTETRAQVDLFAAPPEAAAPVQTALDRALDTIDPDTLSPREALDALYQLKKLSALA.

ATP is bound at residue 623-630 (GPNMGGKS).

Belongs to the DNA mismatch repair MutS family.

Functionally, this protein is involved in the repair of mismatches in DNA. It is possible that it carries out the mismatch recognition step. This protein has a weak ATPase activity. In Polaromonas sp. (strain JS666 / ATCC BAA-500), this protein is DNA mismatch repair protein MutS.